Reading from the N-terminus, the 219-residue chain is Putative mediator of RNA polymerase II transcription subunit 10 (219 aa).

The span at 1-39 shows a compositional bias: low complexity; it reads MEQQQPQQQNDGQQQQQQQQQHQQQQQQQQQQQQQQQQS. Disordered regions lie at residues 1–42 and 177–219; these read MEQQ…SEQE and KETQ…INNN. Coiled-coil stretches lie at residues 13-74 and 166-219; these read QQQQ…VVEE and EYAE…INNN. Over residues 177–192 the composition is skewed to basic and acidic residues; it reads KETQEQQNDDQIKVDD. Residues 194–219 show a composition bias toward low complexity; it reads NNNNNNNNNNNYNNNNNNNNNNINNN.

Belongs to the Mediator complex subunit 10 family. Component of the Mediator complex.

It localises to the nucleus. Its function is as follows. Component of the Mediator complex, a coactivator involved in the regulated transcription of nearly all RNA polymerase II-dependent genes. Mediator functions as a bridge to convey information from gene-specific regulatory proteins to the basal RNA polymerase II transcription machinery. Mediator is recruited to promoters by direct interactions with regulatory proteins and serves as a scaffold for the assembly of a functional preinitiation complex with RNA polymerase II and the general transcription factors. This chain is Putative mediator of RNA polymerase II transcription subunit 10 (med10), found in Dictyostelium discoideum (Social amoeba).